Here is a 137-residue protein sequence, read N- to C-terminus: Nucleoside diphosphate kinase (137 aa).

6 residues coordinate ATP: lysine 9, phenylalanine 58, arginine 86, threonine 92, arginine 103, and asparagine 113. Histidine 121 functions as the Pros-phosphohistidine intermediate in the catalytic mechanism.

This sequence belongs to the NDK family. As to quaternary structure, homotetramer. Requires Mg(2+) as cofactor.

It is found in the cytoplasm. The enzyme catalyses a 2'-deoxyribonucleoside 5'-diphosphate + ATP = a 2'-deoxyribonucleoside 5'-triphosphate + ADP. It carries out the reaction a ribonucleoside 5'-diphosphate + ATP = a ribonucleoside 5'-triphosphate + ADP. In terms of biological role, major role in the synthesis of nucleoside triphosphates other than ATP. The ATP gamma phosphate is transferred to the NDP beta phosphate via a ping-pong mechanism, using a phosphorylated active-site intermediate. In Streptococcus pneumoniae (strain Hungary19A-6), this protein is Nucleoside diphosphate kinase.